The chain runs to 822 residues: Probable alpha,alpha-trehalose-phosphate synthase [UDP-forming] 2 (822 aa).

The interval 12–479 (PRLLVVANRL…GLDFMSELNG (468 aa)) is glycosyltransferase.

In the N-terminal section; belongs to the glycosyltransferase 20 family. The protein in the C-terminal section; belongs to the trehalose phosphatase family.

The enzyme catalyses D-glucose 6-phosphate + UDP-alpha-D-glucose = alpha,alpha-trehalose 6-phosphate + UDP + H(+). This chain is Probable alpha,alpha-trehalose-phosphate synthase [UDP-forming] 2 (TPS2), found in Arabidopsis thaliana (Mouse-ear cress).